The primary structure comprises 133 residues: Ycf54-like protein (133 aa).

Belongs to the ycf54 family.

The sequence is that of Ycf54-like protein from Synechocystis sp. (strain ATCC 27184 / PCC 6803 / Kazusa).